The following is a 75-amino-acid chain: Carwaprin-a (75 aa).

The N-terminal stretch at 1–24 is a signal peptide; that stretch reads MSSGGLLLLLGLLTLWAELTPISG. Positions 27-72 constitute a WAP domain; it reads RPKKPGLCPPRPQKPPCVRECKNDWRCPGEQKCCRYGCIYECRDPI. 4 disulfide bridges follow: C34/C60, C43/C64, C47/C59, and C53/C68.

It belongs to the venom waprin family. As to expression, expressed by the venom gland.

The protein localises to the secreted. Damages membranes of susceptible bacteria. Has no hemolytic activity. Not toxic to mice. Does not inhibit the proteinases elastase and cathepsin G. The chain is Carwaprin-a from Tropidechis carinatus (Australian rough-scaled snake).